A 266-amino-acid polypeptide reads, in one-letter code: Regulatory protein RecX (266 aa).

It belongs to the RecX family.

The protein resides in the cytoplasm. Its function is as follows. Modulates RecA activity. The protein is Regulatory protein RecX of Levilactobacillus brevis (strain ATCC 367 / BCRC 12310 / CIP 105137 / JCM 1170 / LMG 11437 / NCIMB 947 / NCTC 947) (Lactobacillus brevis).